A 222-amino-acid chain; its full sequence is Small ribosomal subunit protein eS1 (222 aa).

It belongs to the eukaryotic ribosomal protein eS1 family.

The polypeptide is Small ribosomal subunit protein eS1 (Pyrobaculum neutrophilum (strain DSM 2338 / JCM 9278 / NBRC 100436 / V24Sta) (Thermoproteus neutrophilus)).